Consider the following 32-residue polypeptide: MSDIN-like toxin proprotein 3 (32 aa).

A propeptide spanning residues 1–10 is cleaved from the precursor; the sequence is MSDINATRLP. The cyclopeptide (Ser-Pro) cross-link spans 11-17; the sequence is SFFFPIP. The propeptide occupies 18 to 32; it reads CISDDIEMVLTRGER.

Belongs to the MSDIN fungal toxin family. Processed by the macrocyclase-peptidase enzyme POPB to yield a toxic cyclic heptapeptide. POPB first removes 10 residues from the N-terminus. Conformational trapping of the remaining peptide forces the enzyme to release this intermediate rather than proceed to macrocyclization. The enzyme rebinds the remaining peptide in a different conformation and catalyzes macrocyclization of the N-terminal 8 residues.

Functionally, probable toxin that belongs to the MSDIN-like toxin family responsible for a large number of food poisoning cases and deaths. The chain is MSDIN-like toxin proprotein 3 from Amanita phalloides (Death cap).